The chain runs to 921 residues: Probable serine/threonine-protein kinase DDB_G0275165 (921 aa).

The region spanning 23 to 277 (FDPLSIIGSG…SNILGLLEYI (255 aa)) is the Protein kinase domain. ATP is bound by residues 29-37 (IGSGGFGKV) and Lys50. The active-site Proton acceptor is Asp147. Disordered regions lie at residues 289–453 (DYEP…SFPR), 465–492 (RGEE…NEED), 530–571 (RPWN…SDSN), 583–653 (NPTP…PTTI), 671–698 (STAT…SNNN), 737–813 (IQPL…SRSL), 833–858 (SSQQ…TSQF), and 877–921 (FEKS…KPKK). 3 stretches are compositionally biased toward low complexity: residues 310 to 352 (NNNN…NNNN), 400 to 412 (SNIN…NNSN), and 429 to 445 (NING…NNNN). Low complexity-rich tracts occupy residues 539–550 (NNNNKNNNNNEK) and 583–638 (NPTP…SLSS). The span at 643 to 653 (PQSTYKVPTTI) shows a compositional bias: polar residues. 3 stretches are compositionally biased toward low complexity: residues 748-775 (TVAA…PTST), 842-857 (QPSS…PTSQ), and 892-910 (TSSS…PSSP).

This sequence belongs to the protein kinase superfamily. TKL Ser/Thr protein kinase family.

It catalyses the reaction L-seryl-[protein] + ATP = O-phospho-L-seryl-[protein] + ADP + H(+). The enzyme catalyses L-threonyl-[protein] + ATP = O-phospho-L-threonyl-[protein] + ADP + H(+). This is Probable serine/threonine-protein kinase DDB_G0275165 from Dictyostelium discoideum (Social amoeba).